Reading from the N-terminus, the 258-residue chain is 5'-nucleotidase SurE (258 aa).

Residues Asp13, Asp14, Ser44, and Asn92 each contribute to the a divalent metal cation site. The segment at 237–258 (SPLTAPHSTEHHDALDGIATEF) is disordered.

The protein belongs to the SurE nucleotidase family. Requires a divalent metal cation as cofactor.

The protein localises to the cytoplasm. It catalyses the reaction a ribonucleoside 5'-phosphate + H2O = a ribonucleoside + phosphate. Its function is as follows. Nucleotidase that shows phosphatase activity on nucleoside 5'-monophosphates. The chain is 5'-nucleotidase SurE from Halobacterium salinarum (strain ATCC 29341 / DSM 671 / R1).